Reading from the N-terminus, the 119-residue chain is Protein TusC (119 aa).

The protein belongs to the DsrF/TusC family. In terms of assembly, heterohexamer, formed by a dimer of trimers. The hexameric TusBCD complex contains 2 copies each of TusB, TusC and TusD. The TusBCD complex interacts with TusE.

It is found in the cytoplasm. In terms of biological role, part of a sulfur-relay system required for 2-thiolation of 5-methylaminomethyl-2-thiouridine (mnm(5)s(2)U) at tRNA wobble positions. The polypeptide is Protein TusC (Escherichia coli O8 (strain IAI1)).